Here is a 157-residue protein sequence, read N- to C-terminus: MAETVEVLVPGGRATAGPPLGPALGPLGINVKAVVDDINKKTAEFNGMSVPVTVMVDDKKNVTLTVGIPPTTALVMKEAGVEKGSGTPNTQAVGNLPLEAVIRIAKMKMESMLSYDLKTAAKEVMGTCVSVGVTVEGKTAKQAIAAVNAGEWDEQLA.

The protein belongs to the universal ribosomal protein uL11 family. In terms of assembly, part of the ribosomal stalk of the 50S ribosomal subunit. Interacts with L10 and the large rRNA to form the base of the stalk. L10 forms an elongated spine to which L12 dimers bind in a sequential fashion forming a multimeric L10(L12)X complex.

In terms of biological role, forms part of the ribosomal stalk which helps the ribosome interact with GTP-bound translation factors. This chain is Large ribosomal subunit protein uL11, found in Methanocorpusculum labreanum (strain ATCC 43576 / DSM 4855 / Z).